The sequence spans 259 residues: MGKIQLGYWILVLFIVTWSDLGLCKKPKPRPGGGWNSGGSNRYPGQPGSPGGNRYPGWGHPQGGGTNWGQPHPGGSNWGQPHPGGSSWGQPHGGSNWGQGGYNKWKPDKPKTNLKHVAGAAAAGAVVGGLGGYMLGSAMSRPVIHFGNEYEDRYYRENQYRYPNQVMYRPIDQYSSQNNFVHDCVNITVKQHTTTTTTKGENFTETDIKIMERVVEQMCITQYQAEYEAAAQRAYNMAFFSAPPVTLLFLSFLIFLIVS.

The N-terminal stretch at 1-24 is a signal peptide; that stretch reads MGKIQLGYWILVLFIVTWSDLGLC. An interaction with GRB2, ERI3 and SYN1 region spans residues 25-235; that stretch reads KKPKPRPGGG…EYEAAAQRAY (211 aa). A disordered region spans residues 29–110; the sequence is PRPGGGWNSG…GYNKWKPDKP (82 aa). Positions 63, 64, 72, 74, 82, 84, 92, and 94 each coordinate Cu(2+). Positions 91–101 are enriched in gly residues; it reads PHGGSNWGQGG. C184 and C219 are disulfide-bonded. N-linked (GlcNAc...) asparagine glycans are attached at residues N186 and N202. The GPI-anchor amidated asparagine moiety is linked to residue N236. Positions 237-259 are cleaved as a propeptide — removed in mature form; sequence MAFFSAPPVTLLFLSFLIFLIVS.

It belongs to the prion family. Monomer and homodimer. Has a tendency to aggregate into amyloid fibrils containing a cross-beta spine, formed by a steric zipper of superposed beta-strands. Soluble oligomers may represent an intermediate stage on the path to fibril formation. Copper binding may promote oligomerization. Interacts with GRB2, APP, ERI3/PRNPIP and SYN1. Mislocalized cytosolically exposed PrP interacts with MGRN1; this interaction alters MGRN1 subcellular location and causes lysosomal enlargement. Interacts with KIAA1191.

The protein resides in the cell membrane. It is found in the golgi apparatus. In terms of biological role, its primary physiological function is unclear. Has cytoprotective activity against internal or environmental stresses. May play a role in neuronal development and synaptic plasticity. May be required for neuronal myelin sheath maintenance. May play a role in iron uptake and iron homeostasis. Soluble oligomers are toxic to cultured neuroblastoma cells and induce apoptosis (in vitro). Association with GPC1 (via its heparan sulfate chains) targets PRNP to lipid rafts. Also provides Cu(2+) or Zn(2+) for the ascorbate-mediated GPC1 deaminase degradation of its heparan sulfate side chains. This chain is Major prion protein (PRNP), found in Trichosurus vulpecula (Brush-tailed possum).